Here is a 116-residue protein sequence, read N- to C-terminus: Somatostatin (116 aa).

The signal sequence occupies residues 1–24; that stretch reads MLSCRLQCALAALSIVLALGGVTG. Positions 25–88 are excised as a propeptide; it reads APSDPRLRQF…QDEMRLELQR (64 aa). A43 is modified (alanine amide). The interval 62 to 99 is disordered; the sequence is QTENDALEPEDLSQAAEQDEMRLELQRSANSNPAMAPR. C105 and C116 form a disulfide bridge.

It belongs to the somatostatin family. In terms of processing, C-terminal amidation of the neuronostatin peptide is required for its biological activity, including for the regulation of mean arterial pressure. Expressed in the pancreas and the spleen (at protein level).

Its subcellular location is the secreted. Functionally, inhibits the secretion of pituitary hormones, including that of growth hormone/somatotropin (GH1), PRL, ACTH, luteinizing hormone (LH) and TSH. Also impairs ghrelin- and GnRH-stimulated secretion of GH1 and LH; the inhibition of ghrelin-stimulated secretion of GH1 can be further increased by neuronostatin. Its function is as follows. May enhance low-glucose-induced glucagon release by pancreatic alpha cells. This effect may be mediated by binding to GPR107 and PKA activation. May regulate cardiac contractile function. May compromise cardiomyocyte viability. In the central nervous system, may impair memory retention and may affect hippocampal excitability. May also have anxiolytic and anorexigenic effects. May play a role in arterial pressure regulation. May inhibit basal, but not ghrelin- or GnRH-stimulated secretion of GH1 or LH, but does not affect the release of other pituitary hormones, including PRL, ACTH, FSH or TSH. Potentiates inhibitory action of somatostatin on ghrelin-stimulated secretion of GH1, but not that on GnRH-stimulated secretion of LH. The chain is Somatostatin (SST) from Sus scrofa (Pig).